The following is a 225-amino-acid chain: Platelet-activating factor acetylhydrolase IB subunit beta homolog (225 aa).

The protein belongs to the 'GDSL' lipolytic enzyme family. Platelet-activating factor acetylhydrolase IB beta/gamma subunits subfamily. In terms of assembly, does not interact with Lis-1.

The sequence is that of Platelet-activating factor acetylhydrolase IB subunit beta homolog (Paf-AHalpha) from Drosophila melanogaster (Fruit fly).